Consider the following 570-residue polypeptide: Sulfite reductase [NADPH] hemoprotein beta-component (570 aa).

[4Fe-4S] cluster is bound by residues C433, C439, C478, and C482. C482 provides a ligand contact to siroheme.

It belongs to the nitrite and sulfite reductase 4Fe-4S domain family. In terms of assembly, alpha(8)-beta(8). The alpha component is a flavoprotein, the beta component is a hemoprotein. Requires siroheme as cofactor. [4Fe-4S] cluster serves as cofactor.

It carries out the reaction hydrogen sulfide + 3 NADP(+) + 3 H2O = sulfite + 3 NADPH + 4 H(+). Its pathway is sulfur metabolism; hydrogen sulfide biosynthesis; hydrogen sulfide from sulfite (NADPH route): step 1/1. Functionally, component of the sulfite reductase complex that catalyzes the 6-electron reduction of sulfite to sulfide. This is one of several activities required for the biosynthesis of L-cysteine from sulfate. The chain is Sulfite reductase [NADPH] hemoprotein beta-component from Aeromonas hydrophila subsp. hydrophila (strain ATCC 7966 / DSM 30187 / BCRC 13018 / CCUG 14551 / JCM 1027 / KCTC 2358 / NCIMB 9240 / NCTC 8049).